The following is a 653-amino-acid chain: Aspartate--tRNA ligase, mitochondrial (653 aa).

The N-terminal 46 residues, 1-46 (MYLGFWLSRLCRGLSRPIGKTMRPIWGSLSRNLALSSQRIPEFSSF), are a transit peptide targeting the mitochondrion. Threonine 218 is modified (phosphothreonine). Serine 241 is subject to Phosphoserine. The segment at 243–246 (QQFK) is aspartate. Arginine 265 contacts L-aspartate. ATP is bound by residues 265–267 (RDE) and glutamate 534. Arginine 541 contacts L-aspartate. 583 to 586 (GLDR) is an ATP binding site.

This sequence belongs to the class-II aminoacyl-tRNA synthetase family. Type 1 subfamily. Homodimer.

It is found in the mitochondrion matrix. The protein localises to the mitochondrion membrane. The catalysed reaction is tRNA(Asp) + L-aspartate + ATP = L-aspartyl-tRNA(Asp) + AMP + diphosphate. Its function is as follows. Catalyzes the attachment of aspartate to tRNA(Asp) in a two-step reaction: aspartate is first activated by ATP to form Asp-AMP and then transferred to the acceptor end of tRNA(Asp). In Mus musculus (Mouse), this protein is Aspartate--tRNA ligase, mitochondrial (Dars2).